Here is a 65-residue protein sequence, read N- to C-terminus: Hirudin-2B (65 aa).

The segment at 1–3 is interaction with thrombin active site; that stretch reads ITY. Intrachain disulfides connect cysteine 6–cysteine 14, cysteine 16–cysteine 28, and cysteine 22–cysteine 39. Residues 39-65 are disordered; it reads CVTGEGTPKPQSHNDGDFEEIPEEYLQ. O-linked (GalNAc...) threonine glycosylation is present at threonine 45. The segment at 55-65 is interaction with fibrinogen-binding exosite of thrombin; it reads DFEEIPEEYLQ. The span at 55 to 65 shows a compositional bias: acidic residues; that stretch reads DFEEIPEEYLQ. The residue at position 63 (tyrosine 63) is a Sulfotyrosine.

Belongs to the protease inhibitor I14 (hirudin) family.

Its subcellular location is the secreted. Hirudin is a potent thrombin-specific protease inhibitor. It forms a stable non-covalent complex with alpha-thrombin, thereby abolishing its ability to cleave fibrinogen. The chain is Hirudin-2B from Hirudo medicinalis (Medicinal leech).